Here is a 128-residue protein sequence, read N- to C-terminus: Large ribosomal subunit protein uL18 (128 aa).

It belongs to the universal ribosomal protein uL18 family. Part of the 50S ribosomal subunit; part of the 5S rRNA/L5/L18/L25 subcomplex. Contacts the 5S and 23S rRNAs.

In terms of biological role, this is one of the proteins that bind and probably mediate the attachment of the 5S RNA into the large ribosomal subunit, where it forms part of the central protuberance. The polypeptide is Large ribosomal subunit protein uL18 (Acidothermus cellulolyticus (strain ATCC 43068 / DSM 8971 / 11B)).